The following is a 214-amino-acid chain: MTQVWTVVVPVKRLGVAKSRLRGALPDQPHEALALALAVDTVSAVLACPVVADVLVVTDDPAVATETGMAGARVVPDRPAAGLNSAVRHGAATAGAGWIAGLTADLPALRPAELAAALSAARTGPTSRRYLPDAPGTGTVLLAAPPGVPLNPRFGGSSAAAHAASGALALLGDWPSLRRDVDTATDLAEAARLGLGPRTALLCGTAAPTAGRSV.

Phosphoenolpyruvate is bound by residues threonine 139, glycine 155, and serine 158.

It belongs to the CofC family.

It catalyses the reaction phosphoenolpyruvate + GTP + H(+) = enolpyruvoyl-2-diphospho-5'-guanosine + diphosphate. Its pathway is cofactor biosynthesis; coenzyme F420 biosynthesis. Its function is as follows. Guanylyltransferase that catalyzes the activation of phosphoenolpyruvate (PEP) as enolpyruvoyl-2-diphospho-5'-guanosine, via the condensation of PEP with GTP. It is involved in the biosynthesis of coenzyme F420, a hydride carrier cofactor. The protein is Phosphoenolpyruvate guanylyltransferase of Salinispora arenicola (strain CNS-205).